The sequence spans 178 residues: Caveolin-1 (178 aa).

Ser2 is subject to N-acetylserine. Residue Ser2 is modified to Phosphoserine. A required for homooligomerization region spans residues 2–94 (SGGKYVDSEG…WKASFTTFTV (93 aa)). Residues 2–104 (SGGKYVDSEG…TKYWFYRLLS (103 aa)) are Cytoplasmic-facing. Lys5 is subject to N6-acetyllysine; alternate. Lys5 is covalently cross-linked (Glycyl lysine isopeptide (Lys-Gly) (interchain with G-Cter in ubiquitin); alternate). Tyr6 carries the phosphotyrosine modification. The residue at position 9 (Ser9) is a Phosphoserine. Tyr14 is modified (phosphotyrosine; by ABL1). Residue Tyr25 is modified to Phosphotyrosine. Residues Lys26, Lys30, Lys39, Lys47, and Lys57 each participate in a glycyl lysine isopeptide (Lys-Gly) (interchain with G-Cter in ubiquitin) cross-link. An interaction with CAVIN3 region spans residues 82–94 (DGIWKASFTTFTV). Residues 105–125 (TIFGIPMALIWGIYFAILSFL) constitute an intramembrane region (helical). Residues 126-178 (HIWAVVPCIKSFLIEIQCISRVYSIYVHTFCDPLFEAIGKIFSNVRISMQKEI) are Cytoplasmic-facing. The interacts with SPRY1, SPRY2, SPRY3 and SPRY4 stretch occupies residues 131 to 142 (VPCIKSFLIEIQ). S-palmitoyl cysteine attachment occurs at residues Cys133, Cys143, and Cys156. The interacts with SPRY1, SPRY2, and SPRY4 stretch occupies residues 149–160 (SIYVHTFCDPLF). Residues 167 to 178 (FSNVRISMQKEI) form an interacts with SPRY1, SPRY2, SPRY3 and SPRY4 region.

Belongs to the caveolin family. As to quaternary structure, homooligomer. Interacts with GLIPR2. Interacts with NOSTRIN. Interacts with SNAP25 and STX1A. Interacts (via the N-terminus) with DPP4; the interaction is direct. Interacts with CTNNB1, CDH1 and JUP. Interacts with PACSIN2; this interaction induces membrane tubulation. Interacts with SLC7A9. Interacts with BMX and BTK. Interacts with TGFBR1. Interacts with CAVIN3 (via leucine-zipper domain) in a cholesterol-sensitive manner. Interacts with CAVIN1. Interacts with EHD2 in a cholesterol-dependent manner. Forms a ternary complex with UBXN6 and VCP; mediates CAV1 targeting to lysosomes for degradation. Interacts with ABCG1; this interaction regulates ABCG1-mediated cholesterol efflux. Interacts with NEU3; this interaction enhances NEU3 sialidase activity within caveola. Interacts (via C-terminus) with SPRY1, SPRY2 (via C-terminus), SPRY3, and SPRY4. Interacts with IGFBP5; this interaction allows trafficking of IGFBP5 from the plasma membrane to the nucleus. Post-translationally, phosphorylated at Tyr-14 by ABL1 in response to oxidative stress. Ubiquitinated. Undergo monoubiquitination and multi- and/or polyubiquitination. Monoubiquitination of N-terminal lysines promotes integration in a ternary complex with UBXN6 and VCP which promotes oligomeric CAV1 targeting to lysosomes for degradation. Ubiquitinated by ZNRF1; leading to degradation and modulation of the TLR4-mediated immune response.

Its subcellular location is the golgi apparatus membrane. It is found in the cell membrane. It localises to the membrane. The protein localises to the caveola. The protein resides in the membrane raft. Its function is as follows. May act as a scaffolding protein within caveolar membranes. Forms a stable heterooligomeric complex with CAV2 that targets to lipid rafts and drives caveolae formation. Mediates the recruitment of CAVIN proteins (CAVIN1/2/3/4) to the caveolae. Interacts directly with G-protein alpha subunits and can functionally regulate their activity. Involved in the costimulatory signal essential for T-cell receptor (TCR)-mediated T-cell activation. Its binding to DPP4 induces T-cell proliferation and NF-kappa-B activation in a T-cell receptor/CD3-dependent manner. Recruits CTNNB1 to caveolar membranes and may regulate CTNNB1-mediated signaling through the Wnt pathway. Negatively regulates TGFB1-mediated activation of SMAD2/3 by mediating the internalization of TGFBR1 from membrane rafts leading to its subsequent degradation. Binds 20(S)-hydroxycholesterol (20(S)-OHC). The polypeptide is Caveolin-1 (CAV1) (Oryctolagus cuniculus (Rabbit)).